We begin with the raw amino-acid sequence, 188 residues long: Probable RNA-binding protein 18 (188 aa).

Residues H23 to A104 form the RRM domain. A disordered region spans residues E151–R188. A compositionally biased stretch (basic residues) spans Q177–R188.

The protein is Probable RNA-binding protein 18 (rbm18) of Danio rerio (Zebrafish).